We begin with the raw amino-acid sequence, 330 residues long: Ketol-acid reductoisomerase (NADP(+)) (330 aa).

A KARI N-terminal Rossmann domain is found at 3 to 184 (LPVYYDKDID…GGGRMGVLET (182 aa)). NADP(+) is bound by residues 26-29 (YGAQ), Ser-52, and Ser-54. The active site involves His-109. Position 135 (Gly-135) interacts with NADP(+). Residues 185–329 (SFKEECESDL…EILRAPFNHK (145 aa)) enclose the KARI C-terminal knotted domain. Asp-193, Glu-197, Glu-229, and Glu-233 together coordinate Mg(2+). A substrate-binding site is contributed by Ser-254.

It belongs to the ketol-acid reductoisomerase family. Mg(2+) is required as a cofactor.

It carries out the reaction (2R)-2,3-dihydroxy-3-methylbutanoate + NADP(+) = (2S)-2-acetolactate + NADPH + H(+). The enzyme catalyses (2R,3R)-2,3-dihydroxy-3-methylpentanoate + NADP(+) = (S)-2-ethyl-2-hydroxy-3-oxobutanoate + NADPH + H(+). Its pathway is amino-acid biosynthesis; L-isoleucine biosynthesis; L-isoleucine from 2-oxobutanoate: step 2/4. The protein operates within amino-acid biosynthesis; L-valine biosynthesis; L-valine from pyruvate: step 2/4. In terms of biological role, involved in the biosynthesis of branched-chain amino acids (BCAA). Catalyzes an alkyl-migration followed by a ketol-acid reduction of (S)-2-acetolactate (S2AL) to yield (R)-2,3-dihydroxy-isovalerate. In the isomerase reaction, S2AL is rearranged via a Mg-dependent methyl migration to produce 3-hydroxy-3-methyl-2-ketobutyrate (HMKB). In the reductase reaction, this 2-ketoacid undergoes a metal-dependent reduction by NADPH to yield (R)-2,3-dihydroxy-isovalerate. This chain is Ketol-acid reductoisomerase (NADP(+)), found in Helicobacter pylori (strain ATCC 700392 / 26695) (Campylobacter pylori).